A 469-amino-acid chain; its full sequence is RuvB-like helicase 2 (469 aa).

An ATP-binding site is contributed by 73–80; it reads GEPGTGKT.

The protein belongs to the RuvB family. Forms homohexameric rings. May form a dodecamer with rvb1 made of two stacked hexameric rings. Component of the chromatin remodeling Ino80 complex. Component of the RNA polymerase II holoenzyme complex.

Its subcellular location is the nucleus. It carries out the reaction ATP + H2O = ADP + phosphate + H(+). Has double-stranded DNA-stimulated ATPase and ATP-dependent DNA helicase (5' to 3') activity suggesting a role in nuclear processes such as recombination and transcription. Its function is as follows. Proposed core component of the chromatin remodeling Ino80 complex which is involved in transcriptional regulation, DNA replication and probably DNA repair. In Dictyostelium discoideum (Social amoeba), this protein is RuvB-like helicase 2 (rvb2).